Consider the following 316-residue polypeptide: Heme oxygenase 2 (316 aa).

Residues 1–12 are compositionally biased toward acidic residues; sequence MSAEVETSEGVD. A disordered region spans residues 1-29; sequence MSAEVETSEGVDESEKKNSGALEKENQMR. N-acetylserine is present on S2. The residue at position 2 (S2) is a Phosphoserine. Positions 13 to 27 are enriched in basic and acidic residues; sequence ESEKKNSGALEKENQ. H45 is a binding site for heme b. 2 HRM repeats span residues 264–269 and 281–286; these read KCPFYA and SCPFRT. Residues C265 and C282 each carry the S-nitrosocysteine modification.

This sequence belongs to the heme oxygenase family. In terms of processing, S-nitrosylated by BLVRB.

Its subcellular location is the microsome. The protein localises to the endoplasmic reticulum. It carries out the reaction heme b + 3 reduced [NADPH--hemoprotein reductase] + 3 O2 = biliverdin IXalpha + CO + Fe(2+) + 3 oxidized [NADPH--hemoprotein reductase] + 3 H2O + H(+). Functionally, heme oxygenase cleaves the heme ring at the alpha methene bridge to form biliverdin. Biliverdin is subsequently converted to bilirubin by biliverdin reductase. Under physiological conditions, the activity of heme oxygenase is highest in the spleen, where senescent erythrocytes are sequestrated and destroyed. Heme oxygenase 2 could be implicated in the production of carbon monoxide in brain where it could act as a neurotransmitter. The sequence is that of Heme oxygenase 2 (HMOX2) from Macaca fascicularis (Crab-eating macaque).